The following is a 269-amino-acid chain: Formamidopyrimidine-DNA glycosylase (269 aa).

Pro2 (schiff-base intermediate with DNA) is an active-site residue. Glu3 (proton donor) is an active-site residue. Lys57 (proton donor; for beta-elimination activity) is an active-site residue. Positions 90, 109, and 150 each coordinate DNA. The FPG-type zinc-finger motif lies at 235-269 (QVYGRKGEPCRVCGTPIVATKHAQRATFYCRHCQK). Residue Arg259 is the Proton donor; for delta-elimination activity of the active site.

The protein belongs to the FPG family. As to quaternary structure, monomer. Zn(2+) is required as a cofactor.

It carries out the reaction Hydrolysis of DNA containing ring-opened 7-methylguanine residues, releasing 2,6-diamino-4-hydroxy-5-(N-methyl)formamidopyrimidine.. The catalysed reaction is 2'-deoxyribonucleotide-(2'-deoxyribose 5'-phosphate)-2'-deoxyribonucleotide-DNA = a 3'-end 2'-deoxyribonucleotide-(2,3-dehydro-2,3-deoxyribose 5'-phosphate)-DNA + a 5'-end 5'-phospho-2'-deoxyribonucleoside-DNA + H(+). Functionally, involved in base excision repair of DNA damaged by oxidation or by mutagenic agents. Acts as a DNA glycosylase that recognizes and removes damaged bases. Has a preference for oxidized purines, such as 7,8-dihydro-8-oxoguanine (8-oxoG). Has AP (apurinic/apyrimidinic) lyase activity and introduces nicks in the DNA strand. Cleaves the DNA backbone by beta-delta elimination to generate a single-strand break at the site of the removed base with both 3'- and 5'-phosphates. The chain is Formamidopyrimidine-DNA glycosylase from Salmonella choleraesuis (strain SC-B67).